The sequence spans 34 residues: Photosystem II reaction center protein M (34 aa).

The chain crosses the membrane as a helical span at residues 5–25 (ILAFSATALLILFPTALLLIL).

This sequence belongs to the PsbM family. PSII is composed of 1 copy each of membrane proteins PsbA, PsbB, PsbC, PsbD, PsbE, PsbF, PsbH, PsbI, PsbJ, PsbK, PsbL, PsbM, PsbT, PsbX, PsbY, PsbZ, Psb30/Ycf12, at least 3 peripheral proteins of the oxygen-evolving complex and a large number of cofactors. It forms dimeric complexes.

Its subcellular location is the plastid membrane. Its function is as follows. One of the components of the core complex of photosystem II (PSII). PSII is a light-driven water:plastoquinone oxidoreductase that uses light energy to abstract electrons from H(2)O, generating O(2) and a proton gradient subsequently used for ATP formation. It consists of a core antenna complex that captures photons, and an electron transfer chain that converts photonic excitation into a charge separation. This subunit is found at the monomer-monomer interface. The chain is Photosystem II reaction center protein M from Cuscuta gronovii (Common dodder).